The sequence spans 309 residues: MRFTSNMAQIIDGKAIAQEVRTQLAHELKGMEAAGYPKPHLTAVIVGEDPASEKYVANKMVACREVGISSETKRLPASTTQEELLQLIADLNKDPQVTGILVQLPVPEHINERTICNAVDVDKDVDGFNEVNIGRTALDMEANIPATPLGVKRLLEHMKIETLGRNAVVVGRSKNVSLPMAILLHADGKYATKAMDATVTICHRYTPPKELARHCRQADIIVVAVGKPGLITKDMVKPGACVIDVGINRIKDESTGQFKLVGDVDFEEVRQVAGHITPVPGGVGPMTVAMLMHNTLKAARKQFDDRKSS.

The protein belongs to the tetrahydrofolate dehydrogenase/cyclohydrolase family. As to quaternary structure, homodimer. The cofactor is Mg(2+).

It is found in the mitochondrion. It catalyses the reaction (6R)-5,10-methylene-5,6,7,8-tetrahydrofolate + NAD(+) = (6R)-5,10-methenyltetrahydrofolate + NADH. It carries out the reaction (6R)-5,10-methenyltetrahydrofolate + H2O = (6R)-10-formyltetrahydrofolate + H(+). Functionally, may play a role in spermatogenesis. The sequence is that of Bifunctional methylenetetrahydrofolate dehydrogenase/cyclohydrolase, mitochondrial (Nmdmc) from Drosophila melanogaster (Fruit fly).